A 146-amino-acid chain; its full sequence is Hemoglobin subunit beta (146 aa).

The Globin domain occupies 2–146; it reads HWSAEEKQLI…VAHALARKYH (145 aa). Residues His63 and His92 each contribute to the heme b site.

The protein belongs to the globin family. Heterotetramer of two alpha chains and two beta chains. As to expression, red blood cells.

Functionally, involved in oxygen transport from the lung to the various peripheral tissues. This chain is Hemoglobin subunit beta (HBB), found in Stercorarius maccormicki (South polar skua).